Reading from the N-terminus, the 300-residue chain is Probable alpha-L-glutamate ligase (300 aa).

Residues 104 to 287 (LQLLARQGID…IAGRMIQWIE (184 aa)) enclose the ATP-grasp domain. Residues lysine 141, 178–179 (EY), aspartate 187, and 211–213 (RSN) contribute to the ATP site. Positions 248, 260, and 262 each coordinate Mg(2+). The Mn(2+) site is built by aspartate 248, glutamate 260, and asparagine 262.

This sequence belongs to the RimK family. It depends on Mg(2+) as a cofactor. The cofactor is Mn(2+).

The polypeptide is Probable alpha-L-glutamate ligase (Citrobacter koseri (strain ATCC BAA-895 / CDC 4225-83 / SGSC4696)).